The chain runs to 268 residues: 4-hydroxy-tetrahydrodipicolinate reductase (268 aa).

Position 8 to 13 (8 to 13 (GAAGRM)) interacts with NAD(+). Position 36 (Arg-36) interacts with NADP(+). NAD(+)-binding positions include 99–101 (GTT) and 123–126 (AANF). The Proton donor/acceptor role is filled by His-156. His-157 is a binding site for (S)-2,3,4,5-tetrahydrodipicolinate. Lys-160 acts as the Proton donor in catalysis. Position 166-167 (166-167 (GT)) interacts with (S)-2,3,4,5-tetrahydrodipicolinate.

It belongs to the DapB family.

Its subcellular location is the cytoplasm. It carries out the reaction (S)-2,3,4,5-tetrahydrodipicolinate + NAD(+) + H2O = (2S,4S)-4-hydroxy-2,3,4,5-tetrahydrodipicolinate + NADH + H(+). It catalyses the reaction (S)-2,3,4,5-tetrahydrodipicolinate + NADP(+) + H2O = (2S,4S)-4-hydroxy-2,3,4,5-tetrahydrodipicolinate + NADPH + H(+). It functions in the pathway amino-acid biosynthesis; L-lysine biosynthesis via DAP pathway; (S)-tetrahydrodipicolinate from L-aspartate: step 4/4. Its function is as follows. Catalyzes the conversion of 4-hydroxy-tetrahydrodipicolinate (HTPA) to tetrahydrodipicolinate. This chain is 4-hydroxy-tetrahydrodipicolinate reductase, found in Pseudomonas fluorescens (strain ATCC BAA-477 / NRRL B-23932 / Pf-5).